The following is a 317-amino-acid chain: Transcription initiation factor IIB 3 (317 aa).

Residues Met1–Glu14 are compositionally biased toward basic and acidic residues. Residues Met1–Cys25 form a disordered region. The TFIIB-type zinc finger occupies Glu21–Glu50. Zn(2+)-binding residues include Cys25, Cys28, Cys42, and Cys45. Residues Ala62 to His83 are disordered. A run of 2 repeats spans residues Ser136–Leu219 and Glu230–Glu311.

This sequence belongs to the TFIIB family.

Its function is as follows. Stabilizes TBP binding to an archaeal box-A promoter. Also responsible for recruiting RNA polymerase II to the pre-initiation complex (DNA-TBP-TFIIB). This is Transcription initiation factor IIB 3 from Halobacterium salinarum (strain ATCC 700922 / JCM 11081 / NRC-1) (Halobacterium halobium).